A 253-amino-acid chain; its full sequence is Ribosomal RNA small subunit methyltransferase A (253 aa).

Residues H12, L14, G39, E60, D81, and N104 each contribute to the S-adenosyl-L-methionine site.

Belongs to the class I-like SAM-binding methyltransferase superfamily. rRNA adenine N(6)-methyltransferase family. RsmA subfamily.

The protein resides in the cytoplasm. It carries out the reaction adenosine(1518)/adenosine(1519) in 16S rRNA + 4 S-adenosyl-L-methionine = N(6)-dimethyladenosine(1518)/N(6)-dimethyladenosine(1519) in 16S rRNA + 4 S-adenosyl-L-homocysteine + 4 H(+). In terms of biological role, specifically dimethylates two adjacent adenosines (A1518 and A1519) in the loop of a conserved hairpin near the 3'-end of 16S rRNA in the 30S particle. May play a critical role in biogenesis of 30S subunits. In Paracidovorax citrulli (strain AAC00-1) (Acidovorax citrulli), this protein is Ribosomal RNA small subunit methyltransferase A.